The primary structure comprises 511 residues: Exodeoxyribonuclease 7 large subunit (511 aa).

Belongs to the XseA family. As to quaternary structure, heterooligomer composed of large and small subunits.

The protein localises to the cytoplasm. The enzyme catalyses Exonucleolytic cleavage in either 5'- to 3'- or 3'- to 5'-direction to yield nucleoside 5'-phosphates.. Functionally, bidirectionally degrades single-stranded DNA into large acid-insoluble oligonucleotides, which are then degraded further into small acid-soluble oligonucleotides. The protein is Exodeoxyribonuclease 7 large subunit of Brucella canis (strain ATCC 23365 / NCTC 10854 / RM-666).